The sequence spans 488 residues: Probable malate:quinone oxidoreductase (488 aa).

The protein belongs to the MQO family. It depends on FAD as a cofactor.

It catalyses the reaction (S)-malate + a quinone = a quinol + oxaloacetate. It functions in the pathway carbohydrate metabolism; tricarboxylic acid cycle; oxaloacetate from (S)-malate (quinone route): step 1/1. The chain is Probable malate:quinone oxidoreductase from Neisseria gonorrhoeae (strain ATCC 700825 / FA 1090).